A 429-amino-acid polypeptide reads, in one-letter code: MIKLRDELGTATTDSAQKILLLGSGELGKEIAIEAQRLGVEVVAVDRYANAPAMQVAHRSYVGNMMDKDFLWSVVEREKPDAIIPEIEAINLDALFEFEKEGYFVVPNAKATWIAMHRERLRETLVKEAKVPTSRYMYATTLDELYEACEKIGYPCHTKAIMSSSGKGSYFVRGPEDIPKAWEEAKTKARGSAEKIIVEEHIDFDVEITELAVRHFDENGEIVTTFPKPVGHYQIDGDYHASWQPAEISEKAEREVYRIAKRITDVLGGLGLFGVEMFVKGDKVWANEVSPRPHDTGMVTLASHPPGFSEFGLHLRAVLGLPIPGEWVDGYRLFPMLIPAATHVIKAKVSGYSPRFRGLAKALSVPNATIRLFGKPEAYPGRRLGVVLAWDKDVQEAKKRAEMVAHMIELRTRSSDWHSQDYEKRKHLL.

N(1)-(5-phospho-beta-D-ribosyl)glycinamide contacts are provided by residues 26–27 (EL) and glutamate 86. ATP contacts are provided by residues arginine 118, lysine 159, 199–202 (EEHI), and glutamate 207. The 197-residue stretch at 123–319 (ETLVKEAKVP…EFGLHLRAVL (197 aa)) folds into the ATP-grasp domain. Glutamate 276 and glutamate 288 together coordinate Mg(2+). Residues aspartate 295, lysine 375, and 382–383 (RR) each bind N(1)-(5-phospho-beta-D-ribosyl)glycinamide.

Belongs to the PurK/PurT family. As to quaternary structure, homodimer.

The enzyme catalyses N(1)-(5-phospho-beta-D-ribosyl)glycinamide + formate + ATP = N(2)-formyl-N(1)-(5-phospho-beta-D-ribosyl)glycinamide + ADP + phosphate + H(+). It participates in purine metabolism; IMP biosynthesis via de novo pathway; N(2)-formyl-N(1)-(5-phospho-D-ribosyl)glycinamide from N(1)-(5-phospho-D-ribosyl)glycinamide (formate route): step 1/1. In terms of biological role, involved in the de novo purine biosynthesis. Catalyzes the transfer of formate to 5-phospho-ribosyl-glycinamide (GAR), producing 5-phospho-ribosyl-N-formylglycinamide (FGAR). Formate is provided by PurU via hydrolysis of 10-formyl-tetrahydrofolate. This is Formate-dependent phosphoribosylglycinamide formyltransferase from Pyrococcus furiosus (strain ATCC 43587 / DSM 3638 / JCM 8422 / Vc1).